Consider the following 590-residue polypeptide: UvrABC system protein C (590 aa).

A GIY-YIG domain is found at 15–92 (DLPGCYMMKD…IQKHKPYYNI (78 aa)). One can recognise a UVR domain in the interval 197 to 232 (SKIKKELEQKMETASENLEFERAAEIRDQIHYVEMT).

This sequence belongs to the UvrC family. In terms of assembly, interacts with UvrB in an incision complex.

Its subcellular location is the cytoplasm. In terms of biological role, the UvrABC repair system catalyzes the recognition and processing of DNA lesions. UvrC both incises the 5' and 3' sides of the lesion. The N-terminal half is responsible for the 3' incision and the C-terminal half is responsible for the 5' incision. In Ligilactobacillus salivarius (strain UCC118) (Lactobacillus salivarius), this protein is UvrABC system protein C.